A 359-amino-acid polypeptide reads, in one-letter code: Fructose-like permease IIC component 2 (359 aa).

A PTS EIIC type-2 domain is found at 11-344; the sequence is TRQHLMTGVS…KSLARKNGSS (334 aa). 9 helical membrane-spanning segments follow: residues 19–39, 60–80, 99–119, 135–155, 176–196, 216–236, 251–271, 290–310, and 314–334; these read VSHM…SVML, IGVA…GYSI, FGAG…VVHY, IFII…WGLG, SIVM…GGPV, VAIA…ATLI, AALV…AAAD, AALV…LPVV, and LGYI…VNVL.

The protein resides in the cell inner membrane. Functionally, the phosphoenolpyruvate-dependent sugar phosphotransferase system (PTS), a major carbohydrate active -transport system, catalyzes the phosphorylation of incoming sugar substrates concomitant with their translocation across the cell membrane. In Escherichia coli (strain K12), this protein is Fructose-like permease IIC component 2 (frwC).